The following is a 199-amino-acid chain: NAD(P)H dehydrogenase (quinone) (199 aa).

The region spanning 4–190 is the Flavodoxin-like domain; that stretch reads VLVLYYSAYG…AGARYQGKTI (187 aa). Residues 10-15 and 78-80 each bind FMN; these read SAYGHI and TRF. NAD(+) is bound at residue tyrosine 12. Tryptophan 98 serves as a coordination point for substrate. FMN-binding positions include 113 to 119 and histidine 134; that span reads STATQHG.

It belongs to the WrbA family. The cofactor is FMN.

The catalysed reaction is a quinone + NADH + H(+) = a quinol + NAD(+). It catalyses the reaction a quinone + NADPH + H(+) = a quinol + NADP(+). This is NAD(P)H dehydrogenase (quinone) from Rhodopseudomonas palustris (strain HaA2).